A 53-amino-acid chain; its full sequence is Sec-independent protein translocase protein TatA (53 aa).

The chain crosses the membrane as a helical span at residues 1–21 (MGMSFSHLLIVLLIIFVLFGA).

It belongs to the TatA/E family. The Tat system comprises two distinct complexes: a TatABC complex, containing multiple copies of TatA, TatB and TatC subunits, and a separate TatA complex, containing only TatA subunits. Substrates initially bind to the TatABC complex, which probably triggers association of the separate TatA complex to form the active translocon.

It localises to the cell inner membrane. Functionally, part of the twin-arginine translocation (Tat) system that transports large folded proteins containing a characteristic twin-arginine motif in their signal peptide across membranes. TatA could form the protein-conducting channel of the Tat system. This chain is Sec-independent protein translocase protein TatA, found in Rickettsia akari (strain Hartford).